The primary structure comprises 303 residues: Olfactory receptor 4X2 (303 aa).

Topologically, residues 1-17 (MTEFIFLVLSPNQEVQR) are extracellular. The helical transmembrane segment at 18-41 (VCFVIFLFLYTAIVLGNFLIVLTV) threads the bilayer. Residues 42 to 49 (MTSRSLGS) lie on the Cytoplasmic side of the membrane. Residues 50–71 (PMYFFLSYLSFMEICYSSATAP) traverse the membrane as a helical segment. Residues 72 to 92 (KLISDLLAERKVISWWGCMAQ) are Extracellular-facing. A disulfide bridge links Cys89 with Cys181. Residues 93-112 (LFFLHFFGGTEIFLLTVMAY) traverse the membrane as a helical segment. Over 113–131 (DHYVAICKPLSYTTIMNWQ) the chain is Cytoplasmic. A helical transmembrane segment spans residues 132 to 150 (VCTVLVGIAWVGGFMHSFA). The Extracellular segment spans residues 151–187 (QILLIFHLLFCGPNVINHYFCDLVPLLKLACSDTFLI). A helical transmembrane segment spans residues 188–211 (GLLIVANGGTLSVISFGVLLASYM). The Cytoplasmic portion of the chain corresponds to 212–227 (VILLHLRTWSSEGWCK). Residues 228–250 (ALSTCGSHFAVVILFFGPCVFNS) traverse the membrane as a helical segment. Residues 251–261 (LRPSTTLPIDK) lie on the Extracellular side of the membrane. The chain crosses the membrane as a helical span at residues 262 to 281 (MVAVFYTVITAILNPVIYSL). The Cytoplasmic portion of the chain corresponds to 282–303 (RNAEMRKAMKRLWIRTLRLNEK).

It belongs to the G-protein coupled receptor 1 family.

It localises to the cell membrane. In terms of biological role, odorant receptor. This chain is Olfactory receptor 4X2 (OR4X2), found in Homo sapiens (Human).